We begin with the raw amino-acid sequence, 177 residues long: Deoxyuridine 5'-triphosphate nucleotidohydrolase (177 aa).

Residues 83 to 85 (RSG), N96, 100 to 102 (TID), and K110 each bind substrate. Polar residues predominate over residues 150–163 (DLTSSQTDLSNQPN). A disordered region spans residues 150–177 (DLTSSQTDLSNQPNTGRGTGGFGSTGQK). The segment covering 166–177 (RGTGGFGSTGQK) has biased composition (gly residues).

It belongs to the dUTPase family. Requires Mg(2+) as cofactor.

It catalyses the reaction dUTP + H2O = dUMP + diphosphate + H(+). It functions in the pathway pyrimidine metabolism; dUMP biosynthesis; dUMP from dCTP (dUTP route): step 2/2. Its function is as follows. This enzyme is involved in nucleotide metabolism: it produces dUMP, the immediate precursor of thymidine nucleotides and it decreases the intracellular concentration of dUTP so that uracil cannot be incorporated into DNA. The protein is Deoxyuridine 5'-triphosphate nucleotidohydrolase of Bartonella bacilliformis (strain ATCC 35685 / KC583 / Herrer 020/F12,63).